Here is a 123-residue protein sequence, read N- to C-terminus: Phosphoribosyl-AMP cyclohydrolase (123 aa).

D76 provides a ligand contact to Mg(2+). A Zn(2+)-binding site is contributed by C77. Mg(2+)-binding residues include D78 and D80. Zn(2+) is bound by residues C93 and C100.

This sequence belongs to the PRA-CH family. In terms of assembly, homodimer. The cofactor is Mg(2+). Requires Zn(2+) as cofactor.

It localises to the cytoplasm. The enzyme catalyses 1-(5-phospho-beta-D-ribosyl)-5'-AMP + H2O = 1-(5-phospho-beta-D-ribosyl)-5-[(5-phospho-beta-D-ribosylamino)methylideneamino]imidazole-4-carboxamide. It participates in amino-acid biosynthesis; L-histidine biosynthesis; L-histidine from 5-phospho-alpha-D-ribose 1-diphosphate: step 3/9. Catalyzes the hydrolysis of the adenine ring of phosphoribosyl-AMP. In Methanocorpusculum labreanum (strain ATCC 43576 / DSM 4855 / Z), this protein is Phosphoribosyl-AMP cyclohydrolase.